Here is a 237-residue protein sequence, read N- to C-terminus: Ubiquinone biosynthesis O-methyltransferase (237 aa).

R38, G58, D79, and M124 together coordinate S-adenosyl-L-methionine.

The protein belongs to the methyltransferase superfamily. UbiG/COQ3 family.

It carries out the reaction a 3-demethylubiquinol + S-adenosyl-L-methionine = a ubiquinol + S-adenosyl-L-homocysteine + H(+). It catalyses the reaction a 3-(all-trans-polyprenyl)benzene-1,2-diol + S-adenosyl-L-methionine = a 2-methoxy-6-(all-trans-polyprenyl)phenol + S-adenosyl-L-homocysteine + H(+). Its pathway is cofactor biosynthesis; ubiquinone biosynthesis. Functionally, O-methyltransferase that catalyzes the 2 O-methylation steps in the ubiquinone biosynthetic pathway. The chain is Ubiquinone biosynthesis O-methyltransferase from Acinetobacter baumannii (strain ACICU).